Consider the following 317-residue polypeptide: Sperm acrosome membrane-associated protein 6 (317 aa).

The signal sequence occupies residues 1-18 (MFVFIAKLLIFSSVITSA). Over 19–281 (FTCYQCFIDE…PSFSFWLPRP (263 aa)) the chain is Extracellular. 5 disulfides stabilise this stretch: Cys21-Cys143, Cys24-Cys146, Cys35-Cys51, Cys128-Cys151, and Cys132-Cys157. A glycan (N-linked (GlcNAc...) asparagine) is linked at Asn29. The Ig-like domain maps to 123-237 (PRVSGCLPPC…EVLSQEQSLV (115 aa)). Asn168 carries an N-linked (GlcNAc...) asparagine glycan. Residues Cys174 and Cys227 are joined by a disulfide bond. The chain crosses the membrane as a helical span at residues 282–302 (ALLITCLTATMLLIFLSLGAM). Over 303 to 317 (CRLWYQIRTNVSNPA) the chain is Cytoplasmic.

Belongs to the SPACA6 family. As to quaternary structure, forms a complex with izumo1 and tmem81 on spermatocyte cell membrane. The complex binds to oocyte protein bncr. Expressed in testis.

Its subcellular location is the cytoplasmic vesicle. It is found in the secretory vesicle. It localises to the acrosome membrane. Sperm protein required for fusion of sperm with the egg membrane during fertilization. May regulate the expression of sperm surface protein DCST2. This is Sperm acrosome membrane-associated protein 6 from Danio rerio (Zebrafish).